The primary structure comprises 423 residues: Glutamate-1-semialdehyde 2,1-aminomutase (423 aa).

N6-(pyridoxal phosphate)lysine is present on K258.

The protein belongs to the class-III pyridoxal-phosphate-dependent aminotransferase family. HemL subfamily. Pyridoxal 5'-phosphate is required as a cofactor.

It is found in the cytoplasm. It catalyses the reaction (S)-4-amino-5-oxopentanoate = 5-aminolevulinate. It functions in the pathway porphyrin-containing compound metabolism; protoporphyrin-IX biosynthesis; 5-aminolevulinate from L-glutamyl-tRNA(Glu): step 2/2. This chain is Glutamate-1-semialdehyde 2,1-aminomutase, found in Pyrobaculum aerophilum (strain ATCC 51768 / DSM 7523 / JCM 9630 / CIP 104966 / NBRC 100827 / IM2).